A 1072-amino-acid chain; its full sequence is DNA-directed RNA polymerase subunit beta (1072 aa).

It belongs to the RNA polymerase beta chain family. In terms of assembly, in plastids the minimal PEP RNA polymerase catalytic core is composed of four subunits: alpha, beta, beta', and beta''. When a (nuclear-encoded) sigma factor is associated with the core the holoenzyme is formed, which can initiate transcription.

Its subcellular location is the plastid. It localises to the chloroplast. The enzyme catalyses RNA(n) + a ribonucleoside 5'-triphosphate = RNA(n+1) + diphosphate. Its function is as follows. DNA-dependent RNA polymerase catalyzes the transcription of DNA into RNA using the four ribonucleoside triphosphates as substrates. The sequence is that of DNA-directed RNA polymerase subunit beta from Olimarabidopsis pumila (Dwarf rocket).